The primary structure comprises 431 residues: 5-methylthioadenosine/S-adenosylhomocysteine deaminase (431 aa).

Zn(2+) is bound by residues histidine 66 and histidine 68. Substrate contacts are provided by glutamate 95, arginine 147, and histidine 185. Histidine 212 contacts Zn(2+). Substrate contacts are provided by glutamate 215 and aspartate 300. Aspartate 300 provides a ligand contact to Zn(2+).

This sequence belongs to the metallo-dependent hydrolases superfamily. MTA/SAH deaminase family. The cofactor is Zn(2+).

It carries out the reaction S-adenosyl-L-homocysteine + H2O + H(+) = S-inosyl-L-homocysteine + NH4(+). The catalysed reaction is S-methyl-5'-thioadenosine + H2O + H(+) = S-methyl-5'-thioinosine + NH4(+). Its function is as follows. Catalyzes the deamination of 5-methylthioadenosine and S-adenosyl-L-homocysteine into 5-methylthioinosine and S-inosyl-L-homocysteine, respectively. Is also able to deaminate adenosine. This chain is 5-methylthioadenosine/S-adenosylhomocysteine deaminase, found in Acetivibrio thermocellus (strain ATCC 27405 / DSM 1237 / JCM 9322 / NBRC 103400 / NCIMB 10682 / NRRL B-4536 / VPI 7372) (Clostridium thermocellum).